Here is a 1978-residue protein sequence, read N- to C-terminus: Sodium channel protein type 8 subunit alpha (1978 aa).

Disordered regions lie at residues 1-20 (MAAR…FTPE) and 28-62 (RIAE…LEAG). Residues 1-132 (MAARLLAPPG…RIAIKILIHS (132 aa)) lie on the Cytoplasmic side of the membrane. Over residues 28–61 (RIAESKLKKPPKADGSHREDDEDSKPKPNSDLEA) the composition is skewed to basic and acidic residues. An I repeat occupies 114–442 (ILSPFNLIRR…KAMLEQLKKQ (329 aa)). The chain crosses the membrane as a helical span at residues 133-151 (VFSMIIMCTILTNCVFMTF). Topologically, residues 152-158 (SNPPEWS) are extracellular. A helical transmembrane segment spans residues 159 to 179 (KNVEYTFTGIYTFESLVKIIA). At 180–193 (RGFCIDGFTFLRDP) the chain is on the cytoplasmic side. The helical transmembrane segment at 194 to 211 (WNWLDFSVIMMAYVTEFV) threads the bilayer. The Extracellular segment spans residues 212-217 (DLGNVS). An N-linked (GlcNAc...) asparagine glycan is attached at N215. The chain crosses the membrane as a helical span at residues 218-234 (ALRTFRVLRALKTISVI). The Cytoplasmic portion of the chain corresponds to 235-253 (PGLKTIVGALIQSVKKLSD). A helical membrane pass occupies residues 254-273 (VMILTVFCLSVFALIGLQLF). The Extracellular segment spans residues 274–355 (MGNLRNKCVV…PNYGYTSFDT (82 aa)). A disulfide bridge links C281 with C333. N-linked (GlcNAc...) asparagine glycosylation is found at N289, N295, N308, and N326. The pore-forming intramembrane region spans 356–380 (FSWAFLALFRLMTQDYWENLYQLTL). E373 serves as a coordination point for Na(+). Topologically, residues 381–387 (RAAGKTY) are extracellular. A helical membrane pass occupies residues 388-408 (MIFFVLVIFVGSFYLVNLILA). Residues 409–751 (VVAMAYEEQN…EIVNLIVMDP (343 aa)) are Cytoplasmic-facing. Disordered stretches follow at residues 446-530 (AQAA…KAFR) and 576-597 (DPGS…SEGR). Residues 473 to 486 (SPRSSSELSKLSSK) are compositionally biased toward low complexity. Positions 489–500 (KERRNRRKKRKQ) are enriched in basic residues. Composition is skewed to basic and acidic residues over residues 501-530 (KELS…KAFR) and 586-597 (DEHSTVEESEGR). S518 and S520 each carry phosphoserine. An II repeat occupies 733–1005 (CHPYWIKLKE…QISVIRIKKG (273 aa)). A helical membrane pass occupies residues 752 to 770 (FVDLAITICIVLNTLFMAM). Residues 771–781 (EHHPMTPQFEH) lie on the Extracellular side of the membrane. The helical transmembrane segment at 782–801 (VLAVGNLVFTGIFTAEMFLK) threads the bilayer. The Cytoplasmic portion of the chain corresponds to 802–815 (LIAMDPYYYFQEGW). A helical membrane pass occupies residues 816 to 835 (NIFDGFIVSLSLMELSLADV). Residues 836–837 (EG) are Extracellular-facing. Residues 838–855 (LSVLRSFRLLRVFKLAKS) form a helical membrane-spanning segment. The Cytoplasmic segment spans residues 856–871 (WPTLNMLIKIIGNSVG). A helical membrane pass occupies residues 872–890 (ALGNLTLVLAIIVFIFAVV). Residues 891-919 (GMQLFGKSYKECVCKINQECKLPRWHMND) are Extracellular-facing. C904 and C910 are oxidised to a cystine. Residues 920 to 940 (FFHSFLIVFRVLCGEWIETMW) constitute an intramembrane region (pore-forming). 2 residues coordinate Na(+): E934 and E937. Residues 941–953 (DCMEVAGQAMCLI) are Extracellular-facing. C942 and C951 are disulfide-bonded. The chain crosses the membrane as a helical span at residues 954-974 (VFMMVMVIGNLVVLNLFLALL). The Cytoplasmic segment spans residues 975-1197 (LSSFSADNLA…TCFLIVEHNW (223 aa)). The disordered stretch occupies residues 1105 to 1146 (NLNTEDVSSESDPEGSKDKLDDTSSSEGSTIDIKPEVEEVPV). One copy of the III repeat lies at 1178 to 1493 (LGKSWWILRK…KKYYNAMKKL (316 aa)). A helical membrane pass occupies residues 1198–1215 (FETFIIFMILLSSGALAF). The Extracellular segment spans residues 1216 to 1228 (EDIYIEQRKTIRT). The chain crosses the membrane as a helical span at residues 1229 to 1247 (ILEYADKVFTYIFILEMLL). The Cytoplasmic segment spans residues 1248–1261 (KWTAYGFVKFFTNA). Residues 1262–1280 (WCWLDFLIVAVSLVSLIAN) form a helical membrane-spanning segment. Residues 1281–1288 (ALGYSELG) lie on the Extracellular side of the membrane. A helical transmembrane segment spans residues 1289–1307 (AIKSLRTLRALRPLRALSR). Residues 1308–1324 (FEGMRVVVNALVGAIPS) are Cytoplasmic-facing. The helical transmembrane segment at 1325–1344 (IMNVLLVCLIFWLIFSIMGV) threads the bilayer. Over 1345-1397 (NLFAGKYHYCFNETSEIRFEIDIVNNKTDCEKLMEGNSTEIRWKNVKINFDNV) the chain is Extracellular. C1354 and C1374 are joined by a disulfide. N-linked (GlcNAc...) asparagine glycans are attached at residues N1356, N1370, and N1381. The pore-forming intramembrane region spans 1398–1419 (GAGYLALLQVATFKGWMDIMYA). Over 1420–1436 (AVDSRKPDEQPDYEGNI) the chain is Extracellular. A helical transmembrane segment spans residues 1437–1458 (YMYIYFVIFIIFGSFFTLNLFI). Residues 1459–1521 (GVIIDNFNQQ…IVFDFVTQQA (63 aa)) lie on the Cytoplasmic side of the membrane. S1495 is subject to Phosphoserine; by PKC. One copy of the IV repeat lies at 1502-1799 (IPRPLNKIQG…WEKFDPDATQ (298 aa)). Residues 1522–1539 (FDIVIMMLICLNMVTMMV) form a helical membrane-spanning segment. The Extracellular portion of the chain corresponds to 1540-1550 (ETDTQSKQMEN). The chain crosses the membrane as a helical span at residues 1551 to 1569 (ILYWINLVFVIFFTCECVL). The Cytoplasmic portion of the chain corresponds to 1570–1581 (KMFALRHYYFTI). A helical transmembrane segment spans residues 1582–1599 (GWNIFDFVVVILSIVGMF). Residues 1600 to 1612 (LADIIEKYFVSPT) lie on the Extracellular side of the membrane. The helical transmembrane segment at 1613–1629 (LFRVIRLARIGRILRLI) threads the bilayer. Over 1630 to 1648 (KGAKGIRTLLFALMMSLPA) the chain is Cytoplasmic. A helical transmembrane segment spans residues 1649 to 1666 (LFNIGLLLFLVMFIFSIF). Residues 1667 to 1688 (GMSNFAYVKHEAGIDDMFNFET) lie on the Extracellular side of the membrane. The pore-forming intramembrane region spans 1689–1711 (FGNSMICLFQITTSAGWDGLLLP). The Extracellular segment spans residues 1712–1740 (ILNRPPDCSLDKEHPGSGFKGDCGNPSVG). Cysteines 1719 and 1734 form a disulfide. A helical membrane pass occupies residues 1741-1763 (IFFFVSYIIISFLIVVNMYIAII). Residues 1764–1978 (LENFSVATEE…RQKEVRESKC (215 aa)) are Cytoplasmic-facing. Residues 1893–1922 (EEVSAVVLQRAYRGHLARRGFICRKMASNK) enclose the IQ domain. The disordered stretch occupies residues 1923–1978 (LENGGTHRDKKESTPSTASLPSYDSVTKPDKEKQQRAEEGRRERAKRQKEVRESKC). The span at 1936–1947 (TPSTASLPSYDS) shows a compositional bias: polar residues. Residues 1949-1978 (TKPDKEKQQRAEEGRRERAKRQKEVRESKC) are compositionally biased toward basic and acidic residues.

Belongs to the sodium channel (TC 1.A.1.10) family. Nav1.6/SCN8A subfamily. In terms of assembly, the voltage-sensitive sodium channel consists of an ion-conducting pore-forming alpha subunit regulated by one or more beta-1 (SCN1B), beta-2 (SCN2B), beta-3 (SCN3B) and/or beta-4 (SCN4B) subunits. Beta-1 (SCN1B) and beta-3 (SCN3B) are non-covalently associated with alpha, while beta-2 (SCN2B) and beta-4 (SCN4B) are covalently linked by disulfide bonds. Interacts with NEDD4 and NEDD4L. Interacts with FGF13. Interacts with FGF14, GBG3, GBB2 and SCN1B. Interacts with TMEM233. Interacts with the conotoxin GVIIJ. Interacts with CALM1; the interaction modulates the inactivation rate of SCN8A. Post-translationally, may be ubiquitinated by NEDD4L; which would promote its endocytosis. Phosphorylation at Ser-1495 by PKC in a highly conserved cytoplasmic loop slows inactivation of the sodium channel and reduces peak sodium currents. In terms of tissue distribution, isoform 1 is highly expressed in brain, moderately in spinal cord, and at low levels in dorsal root ganglia, nodose ganglia and superior cervical ganglia. Not detected in sciatic nerve and non-neuronal tissues. Isoform 2 is hardly detectable, if at all, in brain, expressed at low levels in spinal cord and at highest levels in dorsal root ganglia.

The protein localises to the cell membrane. It localises to the cell projection. The protein resides in the axon. The catalysed reaction is Na(+)(in) = Na(+)(out). Functionally, pore-forming subunit of a voltage-gated sodium channel complex assuming opened or closed conformations in response to the voltage difference across membranes and through which sodium ions selectively pass along their electrochemical gradient. Contributes to neuronal excitability by regulating action potential threshold and propagation. In Rattus norvegicus (Rat), this protein is Sodium channel protein type 8 subunit alpha.